A 566-amino-acid chain; its full sequence is Osteoclast stimulatory transmembrane protein (566 aa).

Over 1-51 the chain is Cytoplasmic; it reads MPGHPGAAEQLVKTGWRSWHLGFWKALAPLQAAWDAFSQPVPASCGQLLTQ. Residues 52–72 traverse the membrane as a helical segment; sequence LLLCASLAAAAAGLVYHWLAS. Residues 73–81 are Extracellular-facing; it reads LLLYPPGPS. A helical membrane pass occupies residues 82–102; sequence AMVATVCGLLVFLSLGLVPPV. Over 103–128 the chain is Cytoplasmic; sequence RCLFALSVPTLGMEQGRRLLLSYSTA. The chain crosses the membrane as a helical span at residues 129-149; it reads TLAIAVVPNVLANVGAAGQVL. Residues 150–227 are Extracellular-facing; the sequence is RCVTEGSLES…ARAAALGTQR (78 aa). Residues 228–248 form a helical membrane-spanning segment; sequence VVTGLFMLGLLVESAWYLHCY. Residues 249–304 are Cytoplasmic-facing; it reads LTDLRFDNIYATQQLTQRLAQAQATHLLAPPPTWLLQAAQLRLSQEELLSCLLRLG. Residues 305-325 traverse the membrane as a helical segment; sequence LLALLLVATAVAVATDHVAFL. Residues 326 to 398 lie on the Extracellular side of the membrane; it reads LAQATVDWAQ…CPLLPARRPR (73 aa). The helical transmembrane segment at 399–419 threads the bilayer; the sequence is AAAPLAAGALQLLAGSTVLLE. Residues 420–566 lie on the Cytoplasmic side of the membrane; that stretch reads AYARRLRHAI…EGNTGHDRPG (147 aa).

The protein resides in the membrane. Its function is as follows. Probable cell surface receptor that plays a role in cellular fusion and cell differentiation. Cooperates with DCSTAMP in modulating cell-cell fusion in both osteoclasts and foreign body giant cells (FBGCs). Involved in osteoclast bone resorption. Promotes osteoclast differentiation and may play a role in the multinucleated osteoclast maturation. This Homo sapiens (Human) protein is Osteoclast stimulatory transmembrane protein (OCSTAMP).